Consider the following 97-residue polypeptide: Co-chaperonin GroES (97 aa).

The protein belongs to the GroES chaperonin family. As to quaternary structure, heptamer of 7 subunits arranged in a ring. Interacts with the chaperonin GroEL.

Its subcellular location is the cytoplasm. Functionally, together with the chaperonin GroEL, plays an essential role in assisting protein folding. The GroEL-GroES system forms a nano-cage that allows encapsulation of the non-native substrate proteins and provides a physical environment optimized to promote and accelerate protein folding. GroES binds to the apical surface of the GroEL ring, thereby capping the opening of the GroEL channel. The protein is Co-chaperonin GroES of Arthrobacter sp. (strain FB24).